The following is a 188-amino-acid chain: GTPase KRas (188 aa).

GTP is bound by residues 10–18, 29–35, 59–60, and 116–119; these read GAGGVGKSA, VDEYDPT, AG, and NKCD. Positions 32–40 match the Effector region motif; it reads YDPTIEDSY. The segment at 167–188 is disordered; that stretch reads KEKMSKEGKKKKKKSKTKCILM. A Cysteine methyl ester modification is found at cysteine 185. Cysteine 185 carries the S-farnesyl cysteine lipid modification. Residues 186–188 constitute a propeptide, removed in mature form; it reads ILM.

The protein belongs to the small GTPase superfamily. Ras family.

It is found in the cell membrane. It localises to the cytoplasm. The enzyme catalyses GTP + H2O = GDP + phosphate + H(+). Alternates between an inactive form bound to GDP and an active form bound to GTP. Activated by a guanine nucleotide-exchange factor (GEF) and inactivated by a GTPase-activating protein (GAP). Ras proteins bind GDP/GTP and possess intrinsic GTPase activity. Plays an important role in the regulation of cell proliferation. This is GTPase KRas (kras1) from Oryzias latipes (Japanese rice fish).